Reading from the N-terminus, the 208-residue chain is Imidazole glycerol phosphate synthase subunit HisH (208 aa).

One can recognise a Glutamine amidotransferase type-1 domain in the interval 1-206; it reads MIVIIDYDTG…KEVTYSCKSS (206 aa). The Nucleophile role is filled by Cys79. Catalysis depends on residues His181 and Glu183.

Heterodimer of HisH and HisF.

The protein resides in the cytoplasm. The enzyme catalyses 5-[(5-phospho-1-deoxy-D-ribulos-1-ylimino)methylamino]-1-(5-phospho-beta-D-ribosyl)imidazole-4-carboxamide + L-glutamine = D-erythro-1-(imidazol-4-yl)glycerol 3-phosphate + 5-amino-1-(5-phospho-beta-D-ribosyl)imidazole-4-carboxamide + L-glutamate + H(+). It carries out the reaction L-glutamine + H2O = L-glutamate + NH4(+). Its pathway is amino-acid biosynthesis; L-histidine biosynthesis; L-histidine from 5-phospho-alpha-D-ribose 1-diphosphate: step 5/9. Its function is as follows. IGPS catalyzes the conversion of PRFAR and glutamine to IGP, AICAR and glutamate. The HisH subunit catalyzes the hydrolysis of glutamine to glutamate and ammonia as part of the synthesis of IGP and AICAR. The resulting ammonia molecule is channeled to the active site of HisF. The sequence is that of Imidazole glycerol phosphate synthase subunit HisH from Listeria monocytogenes serovar 1/2a (strain ATCC BAA-679 / EGD-e).